Here is a 123-residue protein sequence, read N- to C-terminus: uncharacterized protein (123 aa).

A signal peptide spans 1-24; the sequence is MLPLCLTFLSFFLSLGGSFKAVMT. Transmembrane regions (helical) follow at residues 39-59 and 101-121; these read FWIF…ALAI and FGGI…ALTG.

It is found in the membrane. This is an uncharacterized protein from Saccharomyces cerevisiae (strain ATCC 204508 / S288c) (Baker's yeast).